Here is a 557-residue protein sequence, read N- to C-terminus: Formate--tetrahydrofolate ligase 2 (557 aa).

Residue 66-73 (TPAGEGKT) participates in ATP binding.

Belongs to the formate--tetrahydrofolate ligase family.

The catalysed reaction is (6S)-5,6,7,8-tetrahydrofolate + formate + ATP = (6R)-10-formyltetrahydrofolate + ADP + phosphate. It functions in the pathway one-carbon metabolism; tetrahydrofolate interconversion. In Streptococcus pyogenes serotype M18 (strain MGAS8232), this protein is Formate--tetrahydrofolate ligase 2.